A 447-amino-acid polypeptide reads, in one-letter code: MLHRYLPMTEEDKKEMLQTIGVQTIDELFSDIPESVRFKGDLKIKEAKSEPELLKELSQIASKNANLKEYASFLGAGVYDHYAPVIVDHVISRSEFYTAYTPYQPEISQGELQAIFEFQTMICELTGMDVANSSMYDGGTALAEAAMLAAGHTRKKKILVSSAVHPESRAVLETYAKGQHLEVVEINHKDGVTDLDVLQSEVDDTVACVIVQYPNFFGQVEKLADIEKIVHQQKSLFIVSSNPLSLGALTPPGKFGADIVIGDAQPFGIPTQFGGPHCGYFATTKAFMRKIPGRLVGQTVDSDGKRGFVLTLQAREQHIRRDKATSNICSNQALNALAASVAMTALGKQGVKEMARQNISKAQYAKRQFEAKGFTVTFAGPFFNEFVVDCKRPVKEVNDALLQKNIIGGYDLGRDYKEHENHMLVAVTELRTKEEIDTLVNEMGAIQ.

The protein belongs to the GcvP family. N-terminal subunit subfamily. As to quaternary structure, the glycine cleavage system is composed of four proteins: P, T, L and H. In this organism, the P 'protein' is a heterodimer of two subunits.

The catalysed reaction is N(6)-[(R)-lipoyl]-L-lysyl-[glycine-cleavage complex H protein] + glycine + H(+) = N(6)-[(R)-S(8)-aminomethyldihydrolipoyl]-L-lysyl-[glycine-cleavage complex H protein] + CO2. Its function is as follows. The glycine cleavage system catalyzes the degradation of glycine. The P protein binds the alpha-amino group of glycine through its pyridoxal phosphate cofactor; CO(2) is released and the remaining methylamine moiety is then transferred to the lipoamide cofactor of the H protein. The sequence is that of Probable glycine dehydrogenase (decarboxylating) subunit 1 from Bacillus thuringiensis subsp. konkukian (strain 97-27).